Reading from the N-terminus, the 375-residue chain is Heat-inducible transcription repressor HrcA (375 aa).

A compositionally biased stretch (low complexity) spans 307-318; it reads ATDGATHAAASS. The interval 307-331 is disordered; the sequence is ATDGATHAAASSQTENQSGDDTRQA.

It belongs to the HrcA family.

Its function is as follows. Negative regulator of class I heat shock genes (grpE-dnaK-dnaJ and groELS operons). Prevents heat-shock induction of these operons. The protein is Heat-inducible transcription repressor HrcA of Bifidobacterium adolescentis (strain ATCC 15703 / DSM 20083 / NCTC 11814 / E194a).